We begin with the raw amino-acid sequence, 421 residues long: L-evernosamine nitrososynthase (421 aa).

It belongs to the acyl-CoA dehydrogenase family. As to quaternary structure, homotetramer. The cofactor is FAD.

The enzyme catalyses dTDP-beta-L-evernosamine + 2 NADPH + 2 O2 + H(+) = dTDP-2,3,6-trideoxy-3-C-methyl-4-O-methyl-3-nitroso-beta-L-arabino-hexopyranose + 2 NADP(+) + 3 H2O. The catalysed reaction is dTDP-beta-L-evernosamine + NADPH + O2 = dTDP-N-hydroxy-beta-L-evernosamine + NADP(+) + H2O. It catalyses the reaction dTDP-N-hydroxy-beta-L-evernosamine + NADPH + O2 + H(+) = dTDP-2,3,6-trideoxy-3-C-methyl-4-O-methyl-3-nitroso-beta-L-arabino-hexopyranose + NADP(+) + 2 H2O. It functions in the pathway antibiotic biosynthesis. Nitrososynthase involved in the biosynthesis of everninomicin, a broad spectrum orthosomycin antibiotic. Catalyzes the double-oxidation of TDP-L-evernosamine to TDP-L-evernitrosose. The enzyme first oxidizes the substrate to a transient hydroxylamino intermediate, which is then further oxidized to nitroso sugar. The nitroso group is probably spontaneously oxidized giving TDP-L-evernitrose. In vitro, catalyzes the double-oxidation of TDP-L-epi-vancosamine to TDP-L-epi-vancosonitrose. Can also use biosynthetic progenitors of TDP-L-epi-vancosamine, but progenitors solely undergo single-oxidation reactions and terminate in the hydroxylamine oxidation state. The sequence is that of L-evernosamine nitrososynthase from Micromonospora sp. (strain ATCC 39149 / NRRL 15099 / SCC 1413).